Consider the following 307-residue polypeptide: Deaminated glutathione amidase, chloroplastic/cytosolic (307 aa).

Residues 1–36 constitute a chloroplast transit peptide; it reads MNAYSVSLDFTKPSLFTRITLSSQIPLTMATTVNKT. The CN hydrolase domain occupies 37–286; that stretch reads VRVAAAQMTS…TGIVVADIDF (250 aa). The active-site Proton acceptor is the E76. K147 acts as the Proton donor in catalysis. The active-site Nucleophile is the C188.

It belongs to the nitrilase superfamily. NIT1/NIT2 family.

It is found in the plastid. The protein localises to the chloroplast. Its subcellular location is the cytoplasm. The catalysed reaction is N-(4-oxoglutaryl)-L-cysteinylglycine + H2O = L-cysteinylglycine + 2-oxoglutarate. It catalyses the reaction N-(4-carboxy-4-oxobutanoyl)-L-ethylglycylglycine + H2O = N-(2-aminobutanoyl)glycine + 2-oxoglutarate. Catalyzes the hydrolysis of the amide bond in N-(4-oxoglutarate)-L-cysteinylglycine (deaminated glutathione), a metabolite repair reaction to dispose of the harmful deaminated glutathione. Possesses amidase activity toward deaminated ophthalmate in vitro. This chain is Deaminated glutathione amidase, chloroplastic/cytosolic, found in Arabidopsis thaliana (Mouse-ear cress).